A 25-amino-acid polypeptide reads, in one-letter code: Gamma-conotoxin PiVIIA (25 aa).

Disulfide bonds link Cys-1–Cys-15, Cys-8–Cys-19, and Cys-14–Cys-24. Position 4 is a 4-hydroxyproline (Pro-4). Glu-13 and Glu-20 each carry 4-carboxyglutamate.

It belongs to the conotoxin O2 superfamily. As to expression, expressed by the venom duct.

Its subcellular location is the secreted. In terms of biological role, micromolar concentrations of PiVIIA increase the magnitude of the macroscopic calcium current in DRG neurons from rat. An increase, even modest of the calcium current, may have a significant impact in the excitability and electrical activity of neurons, and may set up PiVIIA as a member of the pharmacological family of the gamma-conotoxins. This is Gamma-conotoxin PiVIIA from Conus princeps (Prince cone).